The sequence spans 471 residues: Probable nucleoredoxin 3 (471 aa).

Thioredoxin domains follow at residues 15–173 and 179–334; these read VSIP…ARRQ and QLLG…KERD.

The protein belongs to the nucleoredoxin family.

The catalysed reaction is [protein]-dithiol + NAD(+) = [protein]-disulfide + NADH + H(+). It catalyses the reaction [protein]-dithiol + NADP(+) = [protein]-disulfide + NADPH + H(+). In terms of biological role, probable thiol-disulfide oxidoreductase that may participate in various redox reactions. The polypeptide is Probable nucleoredoxin 3 (Oryza sativa subsp. japonica (Rice)).